The primary structure comprises 512 residues: MKSFLLLFLLFVTFSSALPADQKMENEENMQLAQAYLNQFYSLEIEGSHLVQSKNGSLLDGKIREMQAFFGLTVTGTLDSNTLEIMKTPRCGVPDVGQYGYTLPGWRKYNLTYRIMNYTPDMARADVDEAIQKALEVWSKVTPLTFTKIFKGIADIMIAFRTRVHGRCPRYFDGPLGVLGHAFPPGLGLGGDTHFDEDENWTKDTAGFSLFLVAAHEFGHALGLSHSNDQTALMFPNYVSLDPSKYPLSQDDIDGIQSIYGGLPTTPSKPKGPKIPHACDPDLTFDAITNIRREVMFFKGRHLWRIYHDITDVEFELIASFWPSLPADLQAAYENPRDKILVFKDENFWMIGAYNVLPRYPRSIHILGFPRYVKKIDAAVCDQDTRKTYFFVGIWCWRYDEMTRTMDRGYPQRIVRHFPGIGLRVDAAFQHKGFFYFFRGSKQFEYDIKAKSITRIMRTNTWFQCKEPLNSSLDFHFNQEKAYSGEVETLHHQSLSLLIFGIVHLLNKICSY.

The N-terminal stretch at 1–17 is a signal peptide; sequence MKSFLLLFLLFVTFSSA. The propeptide at 18–98 is activation peptide; the sequence is LPADQKMENE…PRCGVPDVGQ (81 aa). Residues 89-96 carry the Cysteine switch motif; it reads PRCGVPDV. A Zn(2+)-binding site is contributed by C91. N110 carries N-linked (GlcNAc...) asparagine glycosylation. Ca(2+)-binding residues include D121 and D155. H165 is a Zn(2+) binding site. The Ca(2+) site is built by D173, G174, and V178. H181 provides a ligand contact to Zn(2+). The Ca(2+) site is built by G188 and D192. H194 is a binding site for Zn(2+). Positions 196 and 199 each coordinate Ca(2+). Residue H216 coordinates Zn(2+). The active site involves E217. Zn(2+)-binding residues include H220 and H226. Hemopexin repeat units follow at residues 276 to 325, 326 to 371, 373 to 421, and 422 to 465; these read PHAC…WPSL, PADL…GFPR, VKKI…FPGI, and GLRV…WFQC. A disulfide bridge connects residues C279 and C465. D286 is a Ca(2+) binding site. 2 residues coordinate Ca(2+): D377 and D426. A required for retention in the endoplasmic reticulum region spans residues 466–512; the sequence is KEPLNSSLDFHFNQEKAYSGEVETLHHQSLSLLIFGIVHLLNKICSY.

Belongs to the peptidase M10A family. Ca(2+) serves as cofactor. Zn(2+) is required as a cofactor. N-glycosylated.

It is found in the endoplasmic reticulum. Functionally, matrix metalloproteinases degrade protein components of the extracellular matrix such as fibronectin, laminin, gelatins and/or collagens. In Tupaia belangeri (Common tree shrew), this protein is Matrix metalloproteinase-27 (MMP27).